Reading from the N-terminus, the 176-residue chain is Ribosome rescue factor SmrB (176 aa).

Residues L98–E173 enclose the Smr domain.

It belongs to the SmrB family. In terms of assembly, associates with collided ribosomes, but not with correctly translating polysomes.

Functionally, acts as a ribosome collision sensor. Detects stalled/collided disomes (pairs of ribosomes where the leading ribosome is stalled and a second ribosome has collided with it) and endonucleolytically cleaves mRNA at the 5' boundary of the stalled ribosome. Stalled/collided disomes form a new interface (primarily via the 30S subunits) that binds SmrB. Cleaved mRNA becomes available for tmRNA ligation, leading to ribosomal subunit dissociation and rescue of stalled ribosomes. This Yersinia enterocolitica serotype O:8 / biotype 1B (strain NCTC 13174 / 8081) protein is Ribosome rescue factor SmrB.